Reading from the N-terminus, the 316-residue chain is UDP-N-acetylenolpyruvoylglucosamine reductase (316 aa).

Residues 27-225 form the FAD-binding PCMH-type domain; that stretch reads VGGKAERFYR…KTAINALLKK (199 aa). The active site involves Arg190. The active-site Proton donor is Ser239. The active site involves Glu309.

The protein belongs to the MurB family. Requires FAD as cofactor.

The protein resides in the cytoplasm. It catalyses the reaction UDP-N-acetyl-alpha-D-muramate + NADP(+) = UDP-N-acetyl-3-O-(1-carboxyvinyl)-alpha-D-glucosamine + NADPH + H(+). The protein operates within cell wall biogenesis; peptidoglycan biosynthesis. Its function is as follows. Cell wall formation. The sequence is that of UDP-N-acetylenolpyruvoylglucosamine reductase from Coxiella burnetii (strain CbuG_Q212) (Coxiella burnetii (strain Q212)).